We begin with the raw amino-acid sequence, 95 residues long: Aspartyl/glutamyl-tRNA(Asn/Gln) amidotransferase subunit C (95 aa).

This sequence belongs to the GatC family. In terms of assembly, heterotrimer of A, B and C subunits.

It catalyses the reaction L-glutamyl-tRNA(Gln) + L-glutamine + ATP + H2O = L-glutaminyl-tRNA(Gln) + L-glutamate + ADP + phosphate + H(+). It carries out the reaction L-aspartyl-tRNA(Asn) + L-glutamine + ATP + H2O = L-asparaginyl-tRNA(Asn) + L-glutamate + ADP + phosphate + 2 H(+). Functionally, allows the formation of correctly charged Asn-tRNA(Asn) or Gln-tRNA(Gln) through the transamidation of misacylated Asp-tRNA(Asn) or Glu-tRNA(Gln) in organisms which lack either or both of asparaginyl-tRNA or glutaminyl-tRNA synthetases. The reaction takes place in the presence of glutamine and ATP through an activated phospho-Asp-tRNA(Asn) or phospho-Glu-tRNA(Gln). This chain is Aspartyl/glutamyl-tRNA(Asn/Gln) amidotransferase subunit C, found in Thermoanaerobacter pseudethanolicus (strain ATCC 33223 / 39E) (Clostridium thermohydrosulfuricum).